A 268-amino-acid chain; its full sequence is Expansin-B3 (268 aa).

The N-terminal stretch at 1–25 (MAFSISKKAAVAALFSFLVVTCVAG) is a signal peptide. Asn30 is a glycosylation site (N-linked (GlcNAc...) asparagine). Positions 62 to 168 (GGACGFKNTN…KRVPCNFPGL (107 aa)) constitute an Expansin-like EG45 domain. Cystine bridges form between Cys65–Cys93, Cys96–Cys163, and Cys101–Cys107. Positions 181–262 (VYFAVLVEYE…NWAPMAVYRS (82 aa)) constitute an Expansin-like CBD domain. The N-linked (GlcNAc...) asparagine glycan is linked to Asn238.

The protein belongs to the expansin family. Expansin B subfamily. As to expression, expressed in roots, coleoptiles and internodes.

It localises to the secreted. It is found in the cell wall. Its subcellular location is the membrane. In terms of biological role, may cause loosening and extension of plant cell walls by disrupting non-covalent bonding between cellulose microfibrils and matrix glucans. No enzymatic activity has been found. May be required for rapid internodal elongation in deepwater rice during submergence. The sequence is that of Expansin-B3 (EXPB3) from Oryza sativa subsp. japonica (Rice).